Reading from the N-terminus, the 88-residue chain is ATP synthase epsilon chain (88 aa).

This sequence belongs to the ATPase epsilon chain family. As to quaternary structure, F-type ATPases have 2 components, CF(1) - the catalytic core - and CF(0) - the membrane proton channel. CF(1) has five subunits: alpha(3), beta(3), gamma(1), delta(1), epsilon(1). CF(0) has three main subunits: a, b and c.

Its subcellular location is the cell inner membrane. Its function is as follows. Produces ATP from ADP in the presence of a proton gradient across the membrane. The sequence is that of ATP synthase epsilon chain (atpC) from Chlorobium limicola.